The chain runs to 344 residues: DNA-directed RNA polymerase subunit alpha (344 aa).

An alpha N-terminal domain (alpha-NTD) region spans residues 1 to 246 (MLVEKFLKDF…EFLFPLVDFE (246 aa)). Positions 259–344 (ESSNLLDMSI…VLSKNVKISE (86 aa)) are alpha C-terminal domain (alpha-CTD).

The protein belongs to the RNA polymerase alpha chain family. In terms of assembly, homodimer. The RNAP catalytic core consists of 2 alpha, 1 beta, 1 beta' and 1 omega subunit. When a sigma factor is associated with the core the holoenzyme is formed, which can initiate transcription.

It catalyses the reaction RNA(n) + a ribonucleoside 5'-triphosphate = RNA(n+1) + diphosphate. In terms of biological role, DNA-dependent RNA polymerase catalyzes the transcription of DNA into RNA using the four ribonucleoside triphosphates as substrates. This Borreliella burgdorferi (strain ATCC 35210 / DSM 4680 / CIP 102532 / B31) (Borrelia burgdorferi) protein is DNA-directed RNA polymerase subunit alpha.